The sequence spans 1505 residues: Anaphase-promoting complex subunit 1 (1505 aa).

The protein belongs to the APC1 family. The APC/C complex is probably composed of at least 12 subunits: apc-2, apc-10, apc-11, cdc-26, emb-1, emb-27, emb-30, mat-1, mat-2, mat-3, such-1 and gfi-3.

It functions in the pathway protein modification; protein ubiquitination. Probable component of the anaphase promoting complex/cyclosome (APC/C), a cell cycle-regulated E3 ubiquitin ligase that controls progression through mitosis and the G1 phase of the cell cycle. The APC/C complex acts by mediating ubiquitination and subsequent degradation of target proteins. Developmental role in early embryogenesis and the metaphase to anaphase transition in oocyte and spermatocyte meiosis and mitosis in germ cells. Required for embryonic anterior-posterior axis formation. Plays a role in regulating the abundance of glr-1 receptors in postmitotic neurons, which may in turn control animal locomotion. Involved in regulating GABA neurotransmitter release at neuromuscular junctions in GABA motor neurons. In Caenorhabditis elegans, this protein is Anaphase-promoting complex subunit 1.